Here is a 752-residue protein sequence, read N- to C-terminus: Complement C2 (752 aa).

Residues 1–20 form the signal peptide; sequence MGPLMVLFCLLFLYPGLADS. 3 consecutive Sushi domains span residues 22 to 86, 87 to 146, and 149 to 206; these read PSCP…VCKP, VRCP…VCDN, and GHCP…ICRQ. Cystine bridges form between Cys24/Cys64, Cys51/Cys84, Cys89/Cys131, Cys117/Cys144, Cys151/Cys191, and Cys177/Cys204. A glycan (N-linked (GlcNAc...) asparagine) is linked at Asn29. An N-linked (GlcNAc...) asparagine glycan is attached at Asn112. The 199-residue stretch at 254 to 452 folds into the VWFA domain; sequence NLYLLLDCSQ…KALHQVFEHM (199 aa). Residues 260-264 carry the MIDAS-like motif motif; the sequence is DCSQS. Mg(2+) is bound by residues Ser262 and Ser264. Positions 262 and 264 each coordinate Mn(2+). N-linked (GlcNAc...) asparagine glycosylation is found at Asn290 and Asn333. Residue Thr337 coordinates Mg(2+). Thr337 is a Mn(2+) binding site. Disulfide bonds link Cys463–Cys581, Cys492–Cys508, and Cys584–Cys600. In terms of domain architecture, Peptidase S1 spans 464–744; it reads GVGNMSANAS…MQPWLRQHLG (281 aa). 2 N-linked (GlcNAc...) asparagine glycosylation sites follow: Asn467 and Asn471. Residues His507 and Asp561 each act as charge relay system in the active site. A glycan (N-linked (GlcNAc...) asparagine) is linked at Asn621. Cystine bridges form between Cys638–Cys665 and Cys675–Cys705. A glycan (N-linked (GlcNAc...) (complex) asparagine) is linked at Asn651. Ser679 (charge relay system) is an active-site residue.

Belongs to the peptidase S1 family. As to quaternary structure, serine protease component of the C3 convertase, also named C4bC2b, composed of the serine protease complement C2b and complement C4b. Serine protease component of the C5 convertase, also named C4bC2bC3b, composed of the serine protease complement C2b, complement C3b, as well as complement C4b. In terms of assembly, (Microbial infection) Interacts with Schistosoma haematobium TOR (via N-terminal extracellular domain). This results in inhibition of the classical and lectin pathway of complement activation, probably due to interference with binding of C2a to C4b such that C3 convertase cannot be formed. This infers resistance to complement-mediated cell lysis, allowing parasite survival and infection. Requires Mg(2+) as cofactor. Mn(2+) is required as a cofactor. In terms of processing, cleaved and activated by different proteases depending on the complement pathway to generate complement C2a and serine protease complement C2b chains. Cleaved and activated by C1S following activation by the classical complement system. Cleaved and activated by MASP2 following activation by the lectin complement system. Cleaved and activated by GZMK following activation by the GZMK complement system.

It localises to the secreted. The protein resides in the cell surface. The enzyme catalyses Selective cleavage of Arg-|-Ser bond in complement component C3 alpha-chain to form C3a and C3b, and Arg-|-Xaa bond in complement component C5 alpha-chain to form C5a and C5b.. Functionally, precursor of the catalytic component of the C3 and C5 convertase complexes, which are part of the complement pathway, a cascade of proteins that leads to phagocytosis and breakdown of pathogens and signaling that strengthens the adaptive immune system. Component C2 is part of the classical, lectin and GZMK complement systems. Its function is as follows. Catalytic component of the complement C3 and C5 convertase complexes. Following complement activation, recruited to the surface of pathogens by complement C4b opsonin to form the C3 convertase, or C3b and C4b opsonins to form the C5 convertase. As part of the C3 convertase, cleaves and activate C3 into C3a anaphylatoxin and C3b opsonin, the next components of the complement pathways. As part of the C5 convertase, cleaves and activate C5 into C5a anaphylatoxin and C5b component of the membrane attack complex. The sequence is that of Complement C2 from Homo sapiens (Human).